We begin with the raw amino-acid sequence, 661 residues long: Acetyl-coenzyme A synthetase (661 aa).

Residues 199–202 and Thr317 contribute to the CoA site; that span reads RGGK. Residues 393 to 395, 417 to 422, Asp508, and Arg523 each bind ATP; these read GEP and DTFWQT. Ser531 lines the CoA pocket. Residue Arg534 coordinates ATP. Arg596 is a CoA binding site.

The protein belongs to the ATP-dependent AMP-binding enzyme family.

The catalysed reaction is acetate + ATP + CoA = acetyl-CoA + AMP + diphosphate. This chain is Acetyl-coenzyme A synthetase (ACS-1), found in Coprinopsis cinerea (Inky cap fungus).